A 249-amino-acid chain; its full sequence is tRNA (guanine-N(1)-)-methyltransferase (249 aa).

S-adenosyl-L-methionine contacts are provided by residues Gly113 and 133 to 138 (IGDYVL).

This sequence belongs to the RNA methyltransferase TrmD family. In terms of assembly, homodimer.

It localises to the cytoplasm. The catalysed reaction is guanosine(37) in tRNA + S-adenosyl-L-methionine = N(1)-methylguanosine(37) in tRNA + S-adenosyl-L-homocysteine + H(+). Functionally, specifically methylates guanosine-37 in various tRNAs. The polypeptide is tRNA (guanine-N(1)-)-methyltransferase (Aeromonas hydrophila subsp. hydrophila (strain ATCC 7966 / DSM 30187 / BCRC 13018 / CCUG 14551 / JCM 1027 / KCTC 2358 / NCIMB 9240 / NCTC 8049)).